A 910-amino-acid polypeptide reads, in one-letter code: Putative disease resistance protein At1g58400 (910 aa).

A coiled-coil region spans residues 15–57 (DRLTQEYEQFQGVEDRIAELKSNLNLLKSFLKDAEAKKNTSQM). One can recognise an NB-ARC domain in the interval 148–460 (REREMRQTFS…AEGILEPRHY (313 aa)). Residue 191-198 (GMGGLGKT) participates in ATP binding. 2 LRR repeats span residues 580–604 (LELL…GIGK) and 605–628 (LIHL…LGNL).

This sequence belongs to the disease resistance NB-LRR family.

Its function is as follows. Potential disease resistance protein. The sequence is that of Putative disease resistance protein At1g58400 from Arabidopsis thaliana (Mouse-ear cress).